Here is a 259-residue protein sequence, read N- to C-terminus: Diaminopimelate epimerase (259 aa).

3 residues coordinate substrate: N14, Q42, and N60. C69 functions as the Proton donor in the catalytic mechanism. Substrate contacts are provided by residues 70–71 (GN), N151, N184, and 202–203 (ER). The Proton acceptor role is filled by C211. Position 212–213 (212–213 (GS)) interacts with substrate.

Belongs to the diaminopimelate epimerase family. As to quaternary structure, homodimer.

The protein localises to the cytoplasm. It carries out the reaction (2S,6S)-2,6-diaminopimelate = meso-2,6-diaminopimelate. The protein operates within amino-acid biosynthesis; L-lysine biosynthesis via DAP pathway; DL-2,6-diaminopimelate from LL-2,6-diaminopimelate: step 1/1. Catalyzes the stereoinversion of LL-2,6-diaminopimelate (L,L-DAP) to meso-diaminopimelate (meso-DAP), a precursor of L-lysine and an essential component of the bacterial peptidoglycan. The polypeptide is Diaminopimelate epimerase (Wolbachia sp. subsp. Brugia malayi (strain TRS)).